A 61-amino-acid polypeptide reads, in one-letter code: Protein stunted (61 aa).

Residues 3-15 (AWRAAGITYIQYS) form a sufficient for mth activation region.

Belongs to the eukaryotic ATPase epsilon family.

Functionally, activates the G-protein coupled receptor mth in vitro, leading to increased intracellular calcium ion levels. This is Protein stunted from Drosophila melanogaster (Fruit fly).